The chain runs to 177 residues: Protein SPMIP1 (177 aa).

The disordered stretch occupies residues 47 to 80; it reads SRLPRKLPTLLPQASVAPPPPASKTTPSKAPSPA.

The polypeptide is Protein SPMIP1 (Spmip1) (Mus musculus (Mouse)).